Consider the following 88-residue polypeptide: Elongation factor 1-beta (88 aa).

It belongs to the EF-1-beta/EF-1-delta family.

Its function is as follows. Promotes the exchange of GDP for GTP in EF-1-alpha/GDP, thus allowing the regeneration of EF-1-alpha/GTP that could then be used to form the ternary complex EF-1-alpha/GTP/AAtRNA. The chain is Elongation factor 1-beta from Methanosphaera stadtmanae (strain ATCC 43021 / DSM 3091 / JCM 11832 / MCB-3).